Here is a 268-residue protein sequence, read N- to C-terminus: Ribosomal RNA small subunit methyltransferase A (268 aa).

6 residues coordinate S-adenosyl-L-methionine: Asn-18, Leu-20, Gly-45, Glu-66, Asp-91, and Asn-112.

Belongs to the class I-like SAM-binding methyltransferase superfamily. rRNA adenine N(6)-methyltransferase family. RsmA subfamily.

The protein resides in the cytoplasm. It catalyses the reaction adenosine(1518)/adenosine(1519) in 16S rRNA + 4 S-adenosyl-L-methionine = N(6)-dimethyladenosine(1518)/N(6)-dimethyladenosine(1519) in 16S rRNA + 4 S-adenosyl-L-homocysteine + 4 H(+). Specifically dimethylates two adjacent adenosines (A1518 and A1519) in the loop of a conserved hairpin near the 3'-end of 16S rRNA in the 30S particle. May play a critical role in biogenesis of 30S subunits. The protein is Ribosomal RNA small subunit methyltransferase A of Shewanella baltica (strain OS223).